The following is a 227-amino-acid chain: C4-dicarboxylate TRAP transporter small permease protein DctQ (227 aa).

Over 1 to 7 the chain is Cytoplasmic; the sequence is MLRILDR. A helical transmembrane segment spans residues 8 to 28; the sequence is AEEVLIAALIATATVLIFVSV. Residues 29–67 lie on the Periplasmic side of the membrane; the sequence is THRFTLGFVADFVGFFRGHGMTGAAAAAKSLYTTLRGIN. A helical transmembrane segment spans residues 68–88; that stretch reads LVWAQELCIILFVWMAKFGAA. The Cytoplasmic portion of the chain corresponds to 89-112; sequence YGVRTGIHVGIDVLINRLDAPKRR. The helical transmembrane segment at 113–133 threads the bilayer; the sequence is FFILLGLGAGALFTGIIATLG. Residues 134–149 lie on the Periplasmic side of the membrane; that stretch reads ANFVLHMYHASSTSPD. The helical transmembrane segment at 150-170 threads the bilayer; that stretch reads LELPMWLVYLAIPMGSSLMCF. Residues 171-227 lie on the Cytoplasmic side of the membrane; sequence RFLQVAFGFARTGELPHHDHGHVDGVDTENEGIDAEGDVLLHSPLTPRDLVEKPKDN.

This sequence belongs to the TRAP transporter small permease family. The complex comprises the extracytoplasmic solute receptor protein DctP, and the two transmembrane proteins DctQ and DctM.

It localises to the cell inner membrane. Functionally, part of the tripartite ATP-independent periplasmic (TRAP) transport system DctPQM involved in C4-dicarboxylates uptake. The sequence is that of C4-dicarboxylate TRAP transporter small permease protein DctQ from Rhodobacter capsulatus (Rhodopseudomonas capsulata).